We begin with the raw amino-acid sequence, 375 residues long: Mitogen-activated protein kinase 4a (375 aa).

The region spanning 39-325 (KPPLRPIGRG…VEAALAHPYL (287 aa)) is the Protein kinase domain. ATP contacts are provided by residues 45 to 53 (IGRGAYGIV) and Lys68. Asp165 serves as the catalytic Proton acceptor. The residue at position 197 (Thr197) is a Phosphothreonine. A TXY motif is present at residues 197 to 199 (TEY). Tyr199 is modified (phosphotyrosine).

Belongs to the protein kinase superfamily. CMGC Ser/Thr protein kinase family. MAP kinase subfamily. Mg(2+) is required as a cofactor. Post-translationally, dually phosphorylated on Thr-197 and Tyr-199, which activates the enzyme. Phosphorylated in response to pathogen-associated molecular pattern (PAMP) chitin and in response to necrotrophic fungus B.cinerea spores. Not phosphorylated in response to osmotic stress. As to expression, expressed strongly in the apical cells of caulonemal air filaments and rhizoids in fully developed plants and less strongly, but readily detectable in filamentous protonemal tissue at the edge of the plant consisting of both chloronema and caulonema. When filamentous growth of protonema is promoted, the expression is strongest in newly formed apical tip cells of protonemal tissue.

Its subcellular location is the cytoplasm. The protein localises to the nucleus. The catalysed reaction is L-seryl-[protein] + ATP = O-phospho-L-seryl-[protein] + ADP + H(+). The enzyme catalyses L-threonyl-[protein] + ATP = O-phospho-L-threonyl-[protein] + ADP + H(+). Activated by threonine and tyrosine phosphorylation. Activated in response to bacterial and fungal pathogen-associated molecular patterns (PAMPs) including chitin, chitosan and peptidyl glycans (PGNs). Activation in response to chitin requires the CERK1, MEKK1a/b, MKK1a/b/c and MPK4a/b signaling pathway. Activated in response to necrotrophic fungus B.cinerea spores. Not activated in response to osmotic stress. Functionally, the CERK1, MEKK1a/b, MKK1a/b/c and MPK4a/b proteins are involved in pathogen defense. The pathway induces rapid growth inhibition, cell wall depositions and accumulation of defense-related transcripts. This protein is required for innate immunity triggered by pathogen-associated molecular patterns (PAMPs). Involved in resistance to necrotrophic fungi B.cinerea and A.brassicicola. Involved in the transduction of signals from chitosan perception to the activation of defense genes. The sequence is that of Mitogen-activated protein kinase 4a (MPK4a) from Physcomitrium patens (Spreading-leaved earth moss).